A 70-amino-acid chain; its full sequence is Protein SlyX homolog (70 aa).

It belongs to the SlyX family.

In Rhizobium meliloti (strain 1021) (Ensifer meliloti), this protein is Protein SlyX homolog.